The chain runs to 485 residues: N-succinylglutamate 5-semialdehyde dehydrogenase (485 aa).

Residue 220–225 (GSANTG) participates in NAD(+) binding. Residues Glu-243 and Cys-278 contribute to the active site.

It belongs to the aldehyde dehydrogenase family. AstD subfamily.

It catalyses the reaction N-succinyl-L-glutamate 5-semialdehyde + NAD(+) + H2O = N-succinyl-L-glutamate + NADH + 2 H(+). The protein operates within amino-acid degradation; L-arginine degradation via AST pathway; L-glutamate and succinate from L-arginine: step 4/5. Functionally, catalyzes the NAD-dependent reduction of succinylglutamate semialdehyde into succinylglutamate. The polypeptide is N-succinylglutamate 5-semialdehyde dehydrogenase (Aliivibrio fischeri (strain ATCC 700601 / ES114) (Vibrio fischeri)).